The following is a 249-amino-acid chain: Elongation factor Ts (249 aa).

The tract at residues 82-85 is involved in Mg(2+) ion dislocation from EF-Tu; sequence TDFV. A disordered region spans residues 215–249; that stretch reads QAGQLAPEAESTTETADATSETTTEKSSAKKKKKK. Over residues 222–236 the composition is skewed to low complexity; it reads EAESTTETADATSET.

This sequence belongs to the EF-Ts family.

Its subcellular location is the cytoplasm. In terms of biological role, associates with the EF-Tu.GDP complex and induces the exchange of GDP to GTP. It remains bound to the aminoacyl-tRNA.EF-Tu.GTP complex up to the GTP hydrolysis stage on the ribosome. The chain is Elongation factor Ts from Rippkaea orientalis (strain PCC 8801 / RF-1) (Cyanothece sp. (strain PCC 8801)).